A 245-amino-acid chain; its full sequence is 6-carboxyhexanoate--CoA ligase (245 aa).

Belongs to the BioW family. In terms of assembly, homodimer. The cofactor is Mg(2+).

The catalysed reaction is heptanedioate + ATP + CoA = 6-carboxyhexanoyl-CoA + AMP + diphosphate. It functions in the pathway metabolic intermediate metabolism; pimeloyl-CoA biosynthesis; pimeloyl-CoA from pimelate: step 1/1. In terms of biological role, catalyzes the transformation of pimelate into pimeloyl-CoA with concomitant hydrolysis of ATP to AMP. This is 6-carboxyhexanoate--CoA ligase from Sulfurihydrogenibium azorense (strain DSM 15241 / OCM 825 / Az-Fu1).